The sequence spans 421 residues: UDP-N-acetylglucosamine 1-carboxyvinyltransferase (421 aa).

Position 22-23 (22-23 (KN)) interacts with phosphoenolpyruvate. Arg93 lines the UDP-N-acetyl-alpha-D-glucosamine pocket. The Proton donor role is filled by Cys117. Cys117 carries the post-translational modification 2-(S-cysteinyl)pyruvic acid O-phosphothioketal. UDP-N-acetyl-alpha-D-glucosamine contacts are provided by residues 122 to 126 (RPVDL), Asp308, and Val330.

It belongs to the EPSP synthase family. MurA subfamily.

It localises to the cytoplasm. The catalysed reaction is phosphoenolpyruvate + UDP-N-acetyl-alpha-D-glucosamine = UDP-N-acetyl-3-O-(1-carboxyvinyl)-alpha-D-glucosamine + phosphate. It functions in the pathway cell wall biogenesis; peptidoglycan biosynthesis. Cell wall formation. Adds enolpyruvyl to UDP-N-acetylglucosamine. The protein is UDP-N-acetylglucosamine 1-carboxyvinyltransferase of Stutzerimonas stutzeri (strain A1501) (Pseudomonas stutzeri).